The following is a 159-amino-acid chain: SsrA-binding protein (159 aa).

It belongs to the SmpB family.

The protein localises to the cytoplasm. In terms of biological role, required for rescue of stalled ribosomes mediated by trans-translation. Binds to transfer-messenger RNA (tmRNA), required for stable association of tmRNA with ribosomes. tmRNA and SmpB together mimic tRNA shape, replacing the anticodon stem-loop with SmpB. tmRNA is encoded by the ssrA gene; the 2 termini fold to resemble tRNA(Ala) and it encodes a 'tag peptide', a short internal open reading frame. During trans-translation Ala-aminoacylated tmRNA acts like a tRNA, entering the A-site of stalled ribosomes, displacing the stalled mRNA. The ribosome then switches to translate the ORF on the tmRNA; the nascent peptide is terminated with the 'tag peptide' encoded by the tmRNA and targeted for degradation. The ribosome is freed to recommence translation, which seems to be the essential function of trans-translation. The protein is SsrA-binding protein of Coxiella burnetii (strain CbuG_Q212) (Coxiella burnetii (strain Q212)).